A 185-amino-acid polypeptide reads, in one-letter code: Peptidyl-tRNA hydrolase (185 aa).

Tyr15 provides a ligand contact to tRNA. The active-site Proton acceptor is the His20. Residues Tyr64, Asn66, and Asn112 each coordinate tRNA.

The protein belongs to the PTH family. In terms of assembly, monomer.

It is found in the cytoplasm. It catalyses the reaction an N-acyl-L-alpha-aminoacyl-tRNA + H2O = an N-acyl-L-amino acid + a tRNA + H(+). Hydrolyzes ribosome-free peptidyl-tRNAs (with 1 or more amino acids incorporated), which drop off the ribosome during protein synthesis, or as a result of ribosome stalling. In terms of biological role, catalyzes the release of premature peptidyl moieties from peptidyl-tRNA molecules trapped in stalled 50S ribosomal subunits, and thus maintains levels of free tRNAs and 50S ribosomes. This Porphyromonas gingivalis (strain ATCC BAA-308 / W83) protein is Peptidyl-tRNA hydrolase.